The chain runs to 205 residues: MLTIALPKGRIGEDSLALFEKIFDTKFEFGKRKLILEAGGFRFMKVRNQDVPTYVYHQAADLGIVGLDVLEEKRLDIMRLLDLGFGRCDICIGIKAEESLDFSKPSYKVATKMENITRDFFSKKAIPVEIIKLYGSIELAPLVGLADMIVDIVETGETMRQNGLKPALKIMESSAFLIANKNSFYQKKAQILHLREQMSKVLYGS.

It belongs to the ATP phosphoribosyltransferase family. Short subfamily. Heteromultimer composed of HisG and HisZ subunits.

The protein resides in the cytoplasm. The enzyme catalyses 1-(5-phospho-beta-D-ribosyl)-ATP + diphosphate = 5-phospho-alpha-D-ribose 1-diphosphate + ATP. Its pathway is amino-acid biosynthesis; L-histidine biosynthesis; L-histidine from 5-phospho-alpha-D-ribose 1-diphosphate: step 1/9. In terms of biological role, catalyzes the condensation of ATP and 5-phosphoribose 1-diphosphate to form N'-(5'-phosphoribosyl)-ATP (PR-ATP). Has a crucial role in the pathway because the rate of histidine biosynthesis seems to be controlled primarily by regulation of HisG enzymatic activity. The protein is ATP phosphoribosyltransferase of Nitratiruptor sp. (strain SB155-2).